The following is a 248-amino-acid chain: DNA repair protein RecO (248 aa).

It belongs to the RecO family.

Its function is as follows. Involved in DNA repair and RecF pathway recombination. This chain is DNA repair protein RecO, found in Streptomyces griseus subsp. griseus (strain JCM 4626 / CBS 651.72 / NBRC 13350 / KCC S-0626 / ISP 5235).